A 237-amino-acid chain; its full sequence is Pyridoxine 5'-phosphate synthase (237 aa).

Asn-7 and Arg-18 together coordinate 3-amino-2-oxopropyl phosphate. His-43 serves as the catalytic Proton acceptor. Residues Arg-45 and His-50 each contribute to the 1-deoxy-D-xylulose 5-phosphate site. Glu-70 (proton acceptor) is an active-site residue. Position 100 (Thr-100) interacts with 1-deoxy-D-xylulose 5-phosphate. His-190 (proton donor) is an active-site residue. 3-amino-2-oxopropyl phosphate-binding positions include Asp-191 and 213–214; that span reads GH.

The protein belongs to the PNP synthase family. In terms of assembly, homooctamer; tetramer of dimers.

The protein localises to the cytoplasm. It catalyses the reaction 3-amino-2-oxopropyl phosphate + 1-deoxy-D-xylulose 5-phosphate = pyridoxine 5'-phosphate + phosphate + 2 H2O + H(+). It participates in cofactor biosynthesis; pyridoxine 5'-phosphate biosynthesis; pyridoxine 5'-phosphate from D-erythrose 4-phosphate: step 5/5. Functionally, catalyzes the complicated ring closure reaction between the two acyclic compounds 1-deoxy-D-xylulose-5-phosphate (DXP) and 3-amino-2-oxopropyl phosphate (1-amino-acetone-3-phosphate or AAP) to form pyridoxine 5'-phosphate (PNP) and inorganic phosphate. The polypeptide is Pyridoxine 5'-phosphate synthase (Bacteroides fragilis (strain ATCC 25285 / DSM 2151 / CCUG 4856 / JCM 11019 / LMG 10263 / NCTC 9343 / Onslow / VPI 2553 / EN-2)).